A 510-amino-acid chain; its full sequence is MYRALWLLARSRRLVRPPASALASAPGLSGAAVPSFWPPNAARMASQNSFRIEYDTFGELKVPNDKYYGAQTVRSTMNFKIGGVTERMPTPVIKAFGILKRAAAEVNQDYGLDPKIANAIMKAADEVAEGKLNDHFPLVVWQTGSGTQTNMNVNEVISNRAIEMLGGELGSKIPVHPNDHVNKSQSSNDTFPTAMHIAAAIEVHEVLLPGLQKLHDALDAKSKEFAQIIKIGRTHTQDAVPLTLGQEFSGYVQQVKYAVTRIKAAMPRIYELAAGGTAVGTGLNTRIGFAEKVAAKVAALTGLPFVTAPNKFEALAAHDALVELSGAMNTTACSLMKIANDIRFLGSGPRSGLGELILPENEPGSSIMPGKVNPTQCEAMTMVAAQVMGNHVAVTVGGSNGHFELNVFKPMMIKNVLHSARLLGDASVSFTENCVVGIQANTERINKLMNESLMLVTALNPHIGYDKAAKIAKTAHKNGSTLKETAIELGYLTAEQFDEWVKPKDMLGPK.

The transit peptide at Met1–Met44 directs the protein to the mitochondrion. Residues Lys61, Lys66, and Lys80 each carry the N6-acetyllysine; alternate modification. Lys61, Lys66, and Lys80 each carry N6-succinyllysine; alternate. 2 positions are modified to phosphothreonine: Thr85 and Thr90. Lys94 carries the N6-acetyllysine modification. Lys115 and Lys122 each carry N6-acetyllysine; alternate. Lys115 and Lys122 each carry N6-succinyllysine; alternate. Substrate-binding positions include Ser145–Thr147, His176–Asp179, and Ser186–Asn188. The residue at position 213 (Lys213) is an N6-acetyllysine. Lys223 carries the N6-acetyllysine; alternate modification. Lys223 bears the N6-succinyllysine; alternate mark. Thr234 contributes to the substrate binding site. His235 functions as the Proton donor/acceptor in the catalytic mechanism. The residue at position 236 (Thr236) is a Phosphothreonine. An N6-acetyllysine modification is found at Lys256. Lys292 carries the N6-acetyllysine; alternate modification. Position 292 is an N6-succinyllysine; alternate (Lys292). The active site involves Ser365. Substrate contacts are provided by residues Ser366 and Lys371–Asn373. The residue at position 366 (Ser366) is a Phosphoserine. N6-succinyllysine occurs at positions 467 and 473. N6-acetyllysine is present on Lys502.

This sequence belongs to the class-II fumarase/aspartase family. Fumarase subfamily. Homotetramer. Interacts with H2AZ1. Phosphorylation at Thr-236 by PRKDC in response to DNA damage promotes translocation to the nucleus and recruitment to DNA double-strand breaks (DSBs).

It localises to the mitochondrion. Its subcellular location is the cytoplasm. The protein resides in the cytosol. It is found in the nucleus. The protein localises to the chromosome. It carries out the reaction (S)-malate = fumarate + H2O. The protein operates within carbohydrate metabolism; tricarboxylic acid cycle; (S)-malate from fumarate: step 1/1. In terms of biological role, catalyzes the reversible stereospecific interconversion of fumarate to L-malate. Experiments in other species have demonstrated that specific isoforms of this protein act in defined pathways and favor one direction over the other. Catalyzes the hydration of fumarate to L-malate in the tricarboxylic acid (TCA) cycle to facilitate a transition step in the production of energy in the form of NADH. Its function is as follows. Catalyzes the dehydration of L-malate to fumarate. Fumarate metabolism in the cytosol plays a role during urea cycle and arginine metabolism; fumarate being a by-product of the urea cycle and amino-acid catabolism. Also plays a role in DNA repair by promoting non-homologous end-joining (NHEJ). In response to DNA damage and phosphorylation by PRKDC, translocates to the nucleus and accumulates at DNA double-strand breaks (DSBs): acts by catalyzing formation of fumarate, an inhibitor of KDM2B histone demethylase activity, resulting in enhanced dimethylation of histone H3 'Lys-36' (H3K36me2). This chain is Fumarate hydratase, mitochondrial, found in Macaca fascicularis (Crab-eating macaque).